The primary structure comprises 357 residues: MRLETIRQSMRATGAKDCHIDRVLRAWTQAKPLESGARRHQPENFLPQALRTALPALQEELSALARVRSEHPGEDGSSRLLVELADGQTVESVLLPRDGLCISTQIGCAVGCTFCMTGRDGLLRQVSSAEMVAQVVLGRGRRKVTRVVFMGMGEPSHNMDNVLEAIDTLGTYGGIGHKNLVFSTVGDRRVFDRLPQQRVVPALALSLHSTRAELRAELLPKAPHIDPTELVELAEHYARTTGYPIQYQWTLIDGINDSIEEMDGIVRLLTGKYAIMNLIPYNATATLDYRRPSLEHITTLTKYLHAKGIRTTVRNSAGQDVDGGCGQLRARTLDAGTATDAQKISLKHLKTGTRSAA.

The active-site Proton acceptor is the E91. Residues 94–320 (LLPRDGLCIS…TTVRNSAGQD (227 aa)) enclose the Radical SAM core domain. Residues C101 and C325 are joined by a disulfide bond. [4Fe-4S] cluster contacts are provided by C108, C112, and C115. Residues 153-154 (GE), S183, 206-208 (SLH), and N282 each bind S-adenosyl-L-methionine. C325 functions as the S-methylcysteine intermediate in the catalytic mechanism.

Belongs to the radical SAM superfamily. RlmN family. Requires [4Fe-4S] cluster as cofactor.

Its subcellular location is the cytoplasm. This Dechloromonas aromatica (strain RCB) protein is Probable RNA methyltransferase Daro_1157.